A 112-amino-acid polypeptide reads, in one-letter code: Ribonuclease P protein component (112 aa).

The protein belongs to the RnpA family. As to quaternary structure, consists of a catalytic RNA component (M1 or rnpB) and a protein subunit.

The catalysed reaction is Endonucleolytic cleavage of RNA, removing 5'-extranucleotides from tRNA precursor.. In terms of biological role, RNaseP catalyzes the removal of the 5'-leader sequence from pre-tRNA to produce the mature 5'-terminus. It can also cleave other RNA substrates such as 4.5S RNA. The protein component plays an auxiliary but essential role in vivo by binding to the 5'-leader sequence and broadening the substrate specificity of the ribozyme. The protein is Ribonuclease P protein component of Clostridium kluyveri (strain ATCC 8527 / DSM 555 / NBRC 12016 / NCIMB 10680 / K1).